The chain runs to 262 residues: Hydroxyethylthiazole kinase (262 aa).

Methionine 43 serves as a coordination point for substrate. ATP contacts are provided by arginine 118 and threonine 164. Position 191 (alanine 191) interacts with substrate.

This sequence belongs to the Thz kinase family. It depends on Mg(2+) as a cofactor.

It catalyses the reaction 5-(2-hydroxyethyl)-4-methylthiazole + ATP = 4-methyl-5-(2-phosphooxyethyl)-thiazole + ADP + H(+). It functions in the pathway cofactor biosynthesis; thiamine diphosphate biosynthesis; 4-methyl-5-(2-phosphoethyl)-thiazole from 5-(2-hydroxyethyl)-4-methylthiazole: step 1/1. Catalyzes the phosphorylation of the hydroxyl group of 4-methyl-5-beta-hydroxyethylthiazole (THZ). The chain is Hydroxyethylthiazole kinase from Cereibacter sphaeroides (strain ATCC 17029 / ATH 2.4.9) (Rhodobacter sphaeroides).